The sequence spans 561 residues: 7-keto 8-aminopelargonic acid transporter (561 aa).

At 1–49 (MNRVGAVFLFVYERNFFLSIVPDRHRTEIRMSSSERSEVKFDKHFNWWS) the chain is on the cytoplasmic side. The helical transmembrane segment at 50–70 (LLGIAFSLSCSWVGISASMAV) threads the bilayer. Residues 71–77 (GIASGGP) lie on the Extracellular side of the membrane. Residues 78-98 (LLIIYGLIIAAFFSLMCGISL) form a helical membrane-spanning segment. Over 99–160 (GDFAAILPNS…NVEVSSKFQK (62 aa)) the chain is Cytoplasmic. The helical transmembrane segment at 161 to 181 (VSSMVVGLLNYFGAIFTTASI) threads the bilayer. The Extracellular segment spans residues 182-204 (CSSLSMSCIGIHKLLHPDYELKH). The chain crosses the membrane as a helical span at residues 205–225 (WHVFVGYECINAVLTLFNIYS). The Cytoplasmic portion of the chain corresponds to 226–230 (TPLPY). The helical transmembrane segment at 231-251 (ISQFGLYTSLLSFAMTFIICI) threads the bilayer. At 252-281 (VSRSDNTVDPWPKASNIFGSFDNQTGWNSS) the chain is on the extracellular side. A helical membrane pass occupies residues 282–302 (GMAFVVGLVNPIWAFVGIDSA). The Cytoplasmic portion of the chain corresponds to 303–321 (THMIDEVGYSKSRFLVPKV). The helical transmembrane segment at 322-342 (IITTIIVGFVTSFIYCVGLFF) threads the bilayer. Residues 343–369 (CITDQTAVVESILPIVEIFYQATGNRN) lie on the Extracellular side of the membrane. The helical transmembrane segment at 370–390 (LSVFLQCMCITTGFVSGIASG) threads the bilayer. The Cytoplasmic portion of the chain corresponds to 391–439 (TWQSRILQSFGKSYAPFYKEGSLGNKSLKKLAVLTPGFKSPLYAHFLSQ). Residues 440–460 (ICVTIIGCIFMGSSTAFNAII) traverse the membrane as a helical segment. Position 461 (Thr461) is a topological domain, extracellular. Residues 462–482 (ACITLLLMSYAVPSFIFLFVI) traverse the membrane as a helical segment. At 483 to 507 (KKEKFIHRIESDVNCVSRPNRRRMS) the chain is on the cytoplasmic side. Residues 508–528 (MIPHIICILWTLFCLVFLSFP) form a helical membrane-spanning segment. Residues 529–540 (YTLPVTAGNMNY) are Extracellular-facing. The chain crosses the membrane as a helical span at residues 541 to 560 (TSVVYAVVFCIISIVVFPTC). Position 561 (Ile561) is a topological domain, cytoplasmic.

It belongs to the amino acid-polyamine-organocation (APC) superfamily.

It localises to the membrane. Its function is as follows. Transport into the cell of 7-keto 8-aminopelargonic acid. The protein is 7-keto 8-aminopelargonic acid transporter (BIO5) of Saccharomyces cerevisiae (strain ATCC 204508 / S288c) (Baker's yeast).